The primary structure comprises 217 residues: Probable nicotinate-nucleotide adenylyltransferase (217 aa).

Belongs to the NadD family.

The enzyme catalyses nicotinate beta-D-ribonucleotide + ATP + H(+) = deamido-NAD(+) + diphosphate. The protein operates within cofactor biosynthesis; NAD(+) biosynthesis; deamido-NAD(+) from nicotinate D-ribonucleotide: step 1/1. Its function is as follows. Catalyzes the reversible adenylation of nicotinate mononucleotide (NaMN) to nicotinic acid adenine dinucleotide (NaAD). This is Probable nicotinate-nucleotide adenylyltransferase from Dechloromonas aromatica (strain RCB).